The chain runs to 429 residues: Enolase (429 aa).

Gln162 contacts (2R)-2-phosphoglycerate. The active-site Proton donor is the Glu204. Mg(2+)-binding residues include Asp241, Glu282, and Asp309. Residues Lys334, Arg363, Ser364, and Lys385 each coordinate (2R)-2-phosphoglycerate. The Proton acceptor role is filled by Lys334.

This sequence belongs to the enolase family. Mg(2+) is required as a cofactor.

It is found in the cytoplasm. The protein resides in the secreted. The protein localises to the cell surface. It catalyses the reaction (2R)-2-phosphoglycerate = phosphoenolpyruvate + H2O. The protein operates within carbohydrate degradation; glycolysis; pyruvate from D-glyceraldehyde 3-phosphate: step 4/5. Catalyzes the reversible conversion of 2-phosphoglycerate (2-PG) into phosphoenolpyruvate (PEP). It is essential for the degradation of carbohydrates via glycolysis. The chain is Enolase from Acidothermus cellulolyticus (strain ATCC 43068 / DSM 8971 / 11B).